Consider the following 647-residue polypeptide: MSKKEININNYNDDAIQVLEGLDAVRKRPGMYIGSTDGAGLHHLVWEIVDNAVDEALSGFGDRIDVTINKDGSLTVQDHGRGMPTGMHAMGIPTVEVIFTILHAGGKFGQGGYKTSGGLHGVGSSVVNALSSWLEVEITRDGAVYKQRFENGGKPVTTLKKIGTAPKSKTGTKVTFMPDATIFSTTDFKYNTISERLNESAFLLKNVTLSLTDKRTNEAIEFHYENGVQDFVSYLNEDKEILTPVLYFEGEDNGFQVEVALQYNDGFSDNILSFVNNVRTKDGGTHETGLKSAITKVMNDYARKTGLLKEKDKNLEGSDYREGLAAVLSILVPEEHLQFEGQTKDKLGSPLARPVVDGIVADKLTFFLMENGELASNLIRKAIKARDAREAARKARDESRNGKKNKKDKGLLSGKLTPAQSKNPAKNELYLVEGDSAGGSAKQGRDRKFQAILPLRGKVVNTAKAKMADILKNEEINTMIYTIGAGVGADFSIEDANYDKIIIMTDADTDGAHIQTLLLTFFYRYMRPLVEAGHVYIALPPLYKMSKGKGKKEEVAYAWTDGELEELRKQFGKGATLQRYKGLGEMNADQLWETTMNPETRTLIRVTIEDLARAERRVNVLMGDKVEPRRKWIEDNVKFTLEETTVF.

Residues Y11, N51, D78, 118-124 (GLHGVGS), and K344 each bind ATP. The segment covering 391–401 (AARKARDESRN) has biased composition (basic and acidic residues). Residues 391 to 421 (AARKARDESRNGKKNKKDKGLLSGKLTPAQS) form a disordered region. Residues 427 to 541 (NELYLVEGDS…AGHVYIALPP (115 aa)) form the Toprim domain. Residues E433, D506, and D508 each coordinate Mg(2+).

It belongs to the type II topoisomerase family. ParE type 2 subfamily. In terms of assembly, heterotetramer composed of ParC and ParE. Mg(2+) serves as cofactor. Requires Mn(2+) as cofactor. The cofactor is Ca(2+).

It carries out the reaction ATP-dependent breakage, passage and rejoining of double-stranded DNA.. Its activity is regulated as follows. Inhibited by quinolones, such as levofloxacin. Functionally, topoisomerase IV is essential for chromosome segregation. It relaxes supercoiled DNA. Performs the decatenation events required during the replication of a circular DNA molecule. In Streptococcus pneumoniae serotype 4 (strain ATCC BAA-334 / TIGR4), this protein is DNA topoisomerase 4 subunit B.